Reading from the N-terminus, the 174-residue chain is uncharacterized protein (174 aa).

This is an uncharacterized protein from Archaeoglobus fulgidus (strain ATCC 49558 / DSM 4304 / JCM 9628 / NBRC 100126 / VC-16).